The following is a 250-amino-acid chain: 26S proteasome non-ATPase regulatory subunit 8 (250 aa).

In terms of domain architecture, PCI spans 63 to 233 (HDFETFDDYI…QEKPVNLDTV (171 aa)).

The protein belongs to the proteasome subunit S14 family.

Functionally, acts as a regulatory subunit of the 26S proteasome which is involved in the ATP-dependent degradation of ubiquitinated proteins. The protein is 26S proteasome non-ATPase regulatory subunit 8 of Caenorhabditis elegans.